A 359-amino-acid polypeptide reads, in one-letter code: Phosphate acyltransferase (359 aa).

This sequence belongs to the PlsX family. As to quaternary structure, homodimer. Probably interacts with PlsY.

Its subcellular location is the cytoplasm. The catalysed reaction is a fatty acyl-[ACP] + phosphate = an acyl phosphate + holo-[ACP]. It functions in the pathway lipid metabolism; phospholipid metabolism. In terms of biological role, catalyzes the reversible formation of acyl-phosphate (acyl-PO(4)) from acyl-[acyl-carrier-protein] (acyl-ACP). This enzyme utilizes acyl-ACP as fatty acyl donor, but not acyl-CoA. The polypeptide is Phosphate acyltransferase (Citrobacter koseri (strain ATCC BAA-895 / CDC 4225-83 / SGSC4696)).